A 545-amino-acid chain; its full sequence is E3 ubiquitin-protein ligase ipaH9.8 (545 aa).

The interaction with target proteins stretch occupies residues 1–242 (MLPINNNFSL…YHGPRIYFSM (242 aa)). 8 LRR repeats span residues 57–77 (NSDE…NLPA), 78–99 (QITL…PVTL), 100–117 (KKLY…VLPP), 118–139 (ALES…PDSL), 140–157 (LTMN…SLPQ), 158–179 (ALKN…SEGN), 182–203 (VVRE…ILNL), and 205–228 (NECS…QRLT). The tract at residues 243–250 (SDGQQNTL) is linker. Residues 251 to 545 (HRPLADAVTA…PENGSQLHHS (295 aa)) are E3 ubiquitin-protein ligase catalytic domain. One can recognise an NEL domain in the interval 253–545 (PLADAVTAWF…PENGSQLHHS (293 aa)). The active-site Glycyl thioester intermediate is Cys337.

Belongs to the LRR-containing bacterial E3 ligase family. As to quaternary structure, also interacts with human and mouse U2AF1 (U2AF35). Post-translationally, autoubiquitinated (in vitro). Ubiquitinated in the presence of host E1 ubiquitin-activating enzyme, E2 ubiquitin-conjugating enzyme and ubiquitin.

It is found in the secreted. It localises to the host cytoplasm. Its subcellular location is the host nucleus. The catalysed reaction is S-ubiquitinyl-[E2 ubiquitin-conjugating enzyme]-L-cysteine + [acceptor protein]-L-lysine = [E2 ubiquitin-conjugating enzyme]-L-cysteine + N(6)-ubiquitinyl-[acceptor protein]-L-lysine.. Its pathway is protein modification; protein ubiquitination. Its activity is regulated as follows. Exists in an autoinhibited state in the absence of substrate protein, due to interactions of the leucine-rich repeats with NEL domain. Is activated upon binding to a substrate protein. Functionally, effector E3 ubiquitin ligase that interferes with host's ubiquitination pathway and modulates the acute inflammatory responses, thus facilitating bacterial colonization within the host cell. Interacts with IKBKG (NEMO) and TNIP1 (ABIN-1), a ubiquitin-binding adapter protein, which results in TNIP1-dependent 'Lys-27'-linked polyubiquitination of IKBKG. Consequently, polyubiquitinated IKBKG undergoes proteasome-dependent degradation, which perturbs NF-kappa-B activation during bacterial infection. Mediates polyubiquitination of host U2AF1, leading to its proteasomal degradation. Catalyzes 'Lys-48'-linked polyubiquitination and subsequent degradation of a subset of host guanylate-binding proteins (GBP1, GBP2, GBP4 and GBP6), thereby suppressing host cell defense. In contrast, host GBP3 and GBP7 are not ubiquitinated by IpaH9.8. Uses UBE2D2 (UBCH5B) as an E2 ubiquitin-conjugating enzyme. The chain is E3 ubiquitin-protein ligase ipaH9.8 from Shigella flexneri.